A 526-amino-acid polypeptide reads, in one-letter code: Probable polyol transporter 4 (526 aa).

Disordered regions lie at residues 1–21 (MMKNLPEVGNGGGSGFPAVSV) and 28–47 (YQRMDSDAEESQNHREAEAR). Basic and acidic residues predominate over residues 29–47 (QRMDSDAEESQNHREAEAR). Transmembrane regions (helical) follow at residues 63 to 83 (SLNNVLLGYDVGVMSGAVLFI), 92 to 112 (VQTEVLIGSLSIISLFGSLAG), 125 to 145 (MALAALVFQTGAAVMAVAPSF), 153 to 173 (TLAGIGIGLGVMIAPVYIAEI), 180 to 200 (GFFTSFPEIFINLGILLGYVS), 215 to 235 (IMLAVGILPSVFIGFALCVIP), 300 to 320 (MLIVGFGIQCFQQITGIDATV), 340 to 360 (AATVAVGVTKTVFILFATFLI), 371 to 391 (VSTIGMTLCLFCLSFTLTFLG), 395 to 415 (LGITLALLFVCGNVAFFSIGM), 437 to 457 (ALGAVGNRVCSGLVAMSFLSV), and 465 to 485 (GTFFVFSLVSALSVIFVYVLV).

It belongs to the major facilitator superfamily. Sugar transporter (TC 2.A.1.1) family.

It is found in the membrane. Functionally, plasma membrane sugar-proton symporter. This chain is Probable polyol transporter 4 (PLT4), found in Arabidopsis thaliana (Mouse-ear cress).